The chain runs to 501 residues: Lysine--tRNA ligase (501 aa).

Residues glutamate 406 and glutamate 413 each coordinate Mg(2+).

This sequence belongs to the class-II aminoacyl-tRNA synthetase family. In terms of assembly, homodimer. It depends on Mg(2+) as a cofactor.

It is found in the cytoplasm. The enzyme catalyses tRNA(Lys) + L-lysine + ATP = L-lysyl-tRNA(Lys) + AMP + diphosphate. The chain is Lysine--tRNA ligase (lysS) from Halalkalibacterium halodurans (strain ATCC BAA-125 / DSM 18197 / FERM 7344 / JCM 9153 / C-125) (Bacillus halodurans).